A 126-amino-acid chain; its full sequence is Hydrogenase maturation factor HypA (126 aa).

H2 contacts Ni(2+). Zn(2+)-binding residues include C78, C81, C97, and C100.

This sequence belongs to the HypA/HybF family.

Its function is as follows. Involved in the maturation of [NiFe] hydrogenases. Required for nickel insertion into the metal center of the hydrogenase. This is Hydrogenase maturation factor HypA from Methanococcus maripaludis (strain DSM 14266 / JCM 13030 / NBRC 101832 / S2 / LL).